Reading from the N-terminus, the 421-residue chain is Meiotic fizzy-related protein 1 (421 aa).

The tract at residues 79-107 (DTPDRKSYSLSPISPQSQDMLRQPQKPKR) is disordered. Residues 86-98 (YSLSPISPQSQDM) are compositionally biased toward polar residues. WD repeat units lie at residues 123–160 (KNDF…VVQL), 164–203 (GATN…SVRS), 206–246 (GHSE…EMMK), 247–286 (VHEQ…PLHK), 289–331 (EHTA…LQNK), 333–374 (DTGS…NIAN), and 377–416 (AHTN…PKEE).

It belongs to the WD repeat CDC20/Fizzy family. Interacts with mes1.

The protein localises to the nucleus. Functionally, meiosis-specific activator of the anaphase promoting complex/cyclosome (APC/C). Involved in cdc13 degradation. The sequence is that of Meiotic fizzy-related protein 1 (mfr1) from Schizosaccharomyces pombe (strain 972 / ATCC 24843) (Fission yeast).